Here is a 128-residue protein sequence, read N- to C-terminus: Sulfurtransferase TusD (128 aa).

Cysteine 78 functions as the Cysteine persulfide intermediate in the catalytic mechanism.

Belongs to the DsrE/TusD family. As to quaternary structure, heterohexamer, formed by a dimer of trimers. The hexameric TusBCD complex contains 2 copies each of TusB, TusC and TusD. The TusBCD complex interacts with TusE.

It localises to the cytoplasm. Functionally, part of a sulfur-relay system required for 2-thiolation of 5-methylaminomethyl-2-thiouridine (mnm(5)s(2)U) at tRNA wobble positions. Accepts sulfur from TusA and transfers it in turn to TusE. This Escherichia coli O45:K1 (strain S88 / ExPEC) protein is Sulfurtransferase TusD.